The chain runs to 365 residues: Flagellar P-ring protein (365 aa).

The N-terminal stretch at 1-20 is a signal peptide; sequence MKLPHFFVLAALVLSGAAHA.

The protein belongs to the FlgI family. In terms of assembly, the basal body constitutes a major portion of the flagellar organelle and consists of four rings (L,P,S, and M) mounted on a central rod.

Its subcellular location is the periplasm. It localises to the bacterial flagellum basal body. Assembles around the rod to form the L-ring and probably protects the motor/basal body from shearing forces during rotation. The sequence is that of Flagellar P-ring protein from Thiobacillus denitrificans (strain ATCC 25259 / T1).